Here is a 204-residue protein sequence, read N- to C-terminus: Recombination protein RecR (204 aa).

Residues 63–78 (CRICFNVADSELCPIC) form a C4-type zinc finger. One can recognise a Toprim domain in the interval 86 to 181 (NKICVVEQPQ…KVTRLARGLP (96 aa)).

This sequence belongs to the RecR family.

May play a role in DNA repair. It seems to be involved in an RecBC-independent recombinational process of DNA repair. It may act with RecF and RecO. This Dehalococcoides mccartyi (strain ATCC BAA-2266 / KCTC 15142 / 195) (Dehalococcoides ethenogenes (strain 195)) protein is Recombination protein RecR.